A 95-amino-acid chain; its full sequence is Aspartyl/glutamyl-tRNA(Asn/Gln) amidotransferase subunit C (95 aa).

This sequence belongs to the GatC family. As to quaternary structure, heterotrimer of A, B and C subunits.

The enzyme catalyses L-glutamyl-tRNA(Gln) + L-glutamine + ATP + H2O = L-glutaminyl-tRNA(Gln) + L-glutamate + ADP + phosphate + H(+). The catalysed reaction is L-aspartyl-tRNA(Asn) + L-glutamine + ATP + H2O = L-asparaginyl-tRNA(Asn) + L-glutamate + ADP + phosphate + 2 H(+). In terms of biological role, allows the formation of correctly charged Asn-tRNA(Asn) or Gln-tRNA(Gln) through the transamidation of misacylated Asp-tRNA(Asn) or Glu-tRNA(Gln) in organisms which lack either or both of asparaginyl-tRNA or glutaminyl-tRNA synthetases. The reaction takes place in the presence of glutamine and ATP through an activated phospho-Asp-tRNA(Asn) or phospho-Glu-tRNA(Gln). This chain is Aspartyl/glutamyl-tRNA(Asn/Gln) amidotransferase subunit C, found in Azotobacter vinelandii (strain DJ / ATCC BAA-1303).